A 68-amino-acid chain; its full sequence is MMLRLTSVSCFLLVIACLNLFQVVLTRRCFPPGTFCSRYLPCCSGRCCSGWCTRRCSPRYGKRATFQE.

The N-terminal stretch at 1-26 (MMLRLTSVSCFLLVIACLNLFQVVLT) is a signal peptide. Intrachain disulfides connect Cys-29–Cys-43, Cys-36–Cys-48, Cys-42–Cys-52, and Cys-47–Cys-56. Tyr-60 carries the post-translational modification Tyrosine amide. A propeptide spanning residues 64-68 (ATFQE) is cleaved from the precursor.

Belongs to the conotoxin I2 superfamily. As to expression, expressed by the venom duct.

Its subcellular location is the secreted. The sequence is that of Conotoxin Mi11.1 from Conus miles (Soldier cone).